We begin with the raw amino-acid sequence, 133 residues long: Putative nickel-responsive regulator (133 aa).

Residues histidine 74, histidine 85, histidine 87, and cysteine 93 each contribute to the Ni(2+) site.

Belongs to the transcriptional regulatory CopG/NikR family. It depends on Ni(2+) as a cofactor.

Transcriptional regulator. This is Putative nickel-responsive regulator from Saccharolobus islandicus (strain Y.N.15.51 / Yellowstone #2) (Sulfolobus islandicus).